Consider the following 120-residue polypeptide: NAD(P)H-quinone oxidoreductase subunit 3 (120 aa).

Helical transmembrane passes span 7-27 (YEYF…SLTA), 64-84 (MFAL…PWAV), and 89-109 (LGLL…VALV).

The protein belongs to the complex I subunit 3 family. In terms of assembly, NDH-1 can be composed of about 15 different subunits; different subcomplexes with different compositions have been identified which probably have different functions.

The protein localises to the cellular thylakoid membrane. It carries out the reaction a plastoquinone + NADH + (n+1) H(+)(in) = a plastoquinol + NAD(+) + n H(+)(out). The enzyme catalyses a plastoquinone + NADPH + (n+1) H(+)(in) = a plastoquinol + NADP(+) + n H(+)(out). In terms of biological role, NDH-1 shuttles electrons from an unknown electron donor, via FMN and iron-sulfur (Fe-S) centers, to quinones in the respiratory and/or the photosynthetic chain. The immediate electron acceptor for the enzyme in this species is believed to be plastoquinone. Couples the redox reaction to proton translocation, and thus conserves the redox energy in a proton gradient. Cyanobacterial NDH-1 also plays a role in inorganic carbon-concentration. The protein is NAD(P)H-quinone oxidoreductase subunit 3 of Microcystis aeruginosa (strain NIES-843 / IAM M-2473).